The primary structure comprises 193 residues: Holliday junction branch migration complex subunit RuvA (193 aa).

A domain I region spans residues 1–64; sequence MIGRIQGTLV…EDAQQLFGFA (64 aa). Residues 65 to 139 are domain II; that stretch reads TETEREAFRQ…GKLAPDLGVA (75 aa). A flexible linker region spans residues 139–143; that stretch reads AGGKP. The segment at 144 to 193 is domain III; that stretch reads QAIETSSEVLQALLALGYSEKEALLALKQIPADTSISDGIRMGLKYLSKA.

It belongs to the RuvA family. Homotetramer. Forms an RuvA(8)-RuvB(12)-Holliday junction (HJ) complex. HJ DNA is sandwiched between 2 RuvA tetramers; dsDNA enters through RuvA and exits via RuvB. An RuvB hexamer assembles on each DNA strand where it exits the tetramer. Each RuvB hexamer is contacted by two RuvA subunits (via domain III) on 2 adjacent RuvB subunits; this complex drives branch migration. In the full resolvosome a probable DNA-RuvA(4)-RuvB(12)-RuvC(2) complex forms which resolves the HJ.

The protein resides in the cytoplasm. Its function is as follows. The RuvA-RuvB-RuvC complex processes Holliday junction (HJ) DNA during genetic recombination and DNA repair, while the RuvA-RuvB complex plays an important role in the rescue of blocked DNA replication forks via replication fork reversal (RFR). RuvA specifically binds to HJ cruciform DNA, conferring on it an open structure. The RuvB hexamer acts as an ATP-dependent pump, pulling dsDNA into and through the RuvAB complex. HJ branch migration allows RuvC to scan DNA until it finds its consensus sequence, where it cleaves and resolves the cruciform DNA. The protein is Holliday junction branch migration complex subunit RuvA of Polynucleobacter necessarius subsp. necessarius (strain STIR1).